We begin with the raw amino-acid sequence, 406 residues long: Phosphopentomutase (406 aa).

6 residues coordinate Mn(2+): aspartate 10, aspartate 305, histidine 310, aspartate 346, histidine 347, and histidine 358.

It belongs to the phosphopentomutase family. Requires Mn(2+) as cofactor.

It is found in the cytoplasm. It carries out the reaction 2-deoxy-alpha-D-ribose 1-phosphate = 2-deoxy-D-ribose 5-phosphate. It catalyses the reaction alpha-D-ribose 1-phosphate = D-ribose 5-phosphate. It functions in the pathway carbohydrate degradation; 2-deoxy-D-ribose 1-phosphate degradation; D-glyceraldehyde 3-phosphate and acetaldehyde from 2-deoxy-alpha-D-ribose 1-phosphate: step 1/2. Its function is as follows. Isomerase that catalyzes the conversion of deoxy-ribose 1-phosphate (dRib-1-P) and ribose 1-phosphate (Rib-1-P) to deoxy-ribose 5-phosphate (dRib-5-P) and ribose 5-phosphate (Rib-5-P), respectively. This chain is Phosphopentomutase, found in Vibrio campbellii (strain ATCC BAA-1116).